The primary structure comprises 503 residues: Maturase K (503 aa).

It belongs to the intron maturase 2 family. MatK subfamily.

It is found in the plastid. It localises to the chloroplast. Its function is as follows. Usually encoded in the trnK tRNA gene intron. Probably assists in splicing its own and other chloroplast group II introns. The chain is Maturase K from Eucalyptus globulus (Tasmanian blue gum).